Consider the following 543-residue polypeptide: CTP synthase (543 aa).

Positions 1–265 (MARYIFITGG…DDEVLAAFAI (265 aa)) are amidoligase domain. Serine 13 contributes to the CTP binding site. Residue serine 13 coordinates UTP. Residue 14-19 (SLGKGL) participates in ATP binding. An L-glutamine-binding site is contributed by tyrosine 54. Aspartate 71 lines the ATP pocket. Mg(2+) contacts are provided by aspartate 71 and glutamate 139. CTP-binding positions include 146-148 (DIE), 186-191 (KTKPTQ), and lysine 222. Residues 186 to 191 (KTKPTQ) and lysine 222 contribute to the UTP site. 238–240 (RDA) lines the ATP pocket. A Glutamine amidotransferase type-1 domain is found at 291–542 (TIAIVGKYTG…IEAALVRSRL (252 aa)). L-glutamine is bound at residue glycine 353. The Nucleophile; for glutamine hydrolysis role is filled by cysteine 380. L-glutamine-binding positions include 381 to 384 (FGMQ), glutamate 404, and arginine 470. Residues histidine 515 and glutamate 517 contribute to the active site.

It belongs to the CTP synthase family. As to quaternary structure, homotetramer.

It catalyses the reaction UTP + L-glutamine + ATP + H2O = CTP + L-glutamate + ADP + phosphate + 2 H(+). The enzyme catalyses L-glutamine + H2O = L-glutamate + NH4(+). The catalysed reaction is UTP + NH4(+) + ATP = CTP + ADP + phosphate + 2 H(+). It participates in pyrimidine metabolism; CTP biosynthesis via de novo pathway; CTP from UDP: step 2/2. With respect to regulation, allosterically activated by GTP, when glutamine is the substrate; GTP has no effect on the reaction when ammonia is the substrate. The allosteric effector GTP functions by stabilizing the protein conformation that binds the tetrahedral intermediate(s) formed during glutamine hydrolysis. Inhibited by the product CTP, via allosteric rather than competitive inhibition. Its function is as follows. Catalyzes the ATP-dependent amination of UTP to CTP with either L-glutamine or ammonia as the source of nitrogen. Regulates intracellular CTP levels through interactions with the four ribonucleotide triphosphates. The protein is CTP synthase of Rhodopseudomonas palustris (strain HaA2).